Reading from the N-terminus, the 319-residue chain is Phospho-N-acetylmuramoyl-pentapeptide-transferase (319 aa).

A run of 10 helical transmembrane segments spans residues 5–25, 51–71, 79–99, 116–136, 149–169, 172–192, 197–217, 224–244, 252–272, and 299–319; these read LIPF…FIGF, TMGG…VLIW, TWIL…DDGI, LGQI…HFAF, SFLF…AVNL, GLDG…AWIA, NWVI…FFIF, IFMG…VSIF, LLIG…VISF, and VDIV…IIWG.

It belongs to the glycosyltransferase 4 family. MraY subfamily. Mg(2+) is required as a cofactor.

Its subcellular location is the cell membrane. It carries out the reaction UDP-N-acetyl-alpha-D-muramoyl-L-alanyl-gamma-D-glutamyl-L-lysyl-D-alanyl-D-alanine + di-trans,octa-cis-undecaprenyl phosphate = Mur2Ac(oyl-L-Ala-gamma-D-Glu-L-Lys-D-Ala-D-Ala)-di-trans,octa-cis-undecaprenyl diphosphate + UMP. It functions in the pathway cell wall biogenesis; peptidoglycan biosynthesis. In terms of biological role, catalyzes the initial step of the lipid cycle reactions in the biosynthesis of the cell wall peptidoglycan: transfers peptidoglycan precursor phospho-MurNAc-pentapeptide from UDP-MurNAc-pentapeptide onto the lipid carrier undecaprenyl phosphate, yielding undecaprenyl-pyrophosphoryl-MurNAc-pentapeptide, known as lipid I. The protein is Phospho-N-acetylmuramoyl-pentapeptide-transferase of Lactobacillus gasseri (strain ATCC 33323 / DSM 20243 / BCRC 14619 / CIP 102991 / JCM 1131 / KCTC 3163 / NCIMB 11718 / NCTC 13722 / AM63).